Consider the following 770-residue polypeptide: uncharacterized protein (770 aa).

An N-terminal signal peptide occupies residues 1–24 (MVSAAWLRYPSLLTLGILVSRVAA). Residues Asn-78, Asn-204, Asn-533, and Asn-638 are each glycosylated (N-linked (GlcNAc...) asparagine). The disordered stretch occupies residues 746 to 770 (SWGTGQNDVPPSLGAGIKRDGLRFT).

The protein belongs to the glycosyl hydrolase 92 family.

It localises to the secreted. This is an uncharacterized protein from Arthroderma benhamiae (strain ATCC MYA-4681 / CBS 112371) (Trichophyton mentagrophytes).